The following is a 902-amino-acid chain: Translation initiation factor IF-2 (902 aa).

Composition is skewed to basic and acidic residues over residues 1–12 (MVDTKTPGDKKL) and 43–60 (VVEKRGKRRIGDGPEPHA). Positions 1-276 (MVDTKTPGDK…KPGPQKERGR (276 aa)) are disordered. Residues 69 to 84 (PAAPAPSRPAPPPAPP) are compositionally biased toward pro residues. Residues 111–174 (AKLREVEERR…ETEAKKRFGE (64 aa)) are compositionally biased toward basic and acidic residues. Low complexity-rich tracts occupy residues 181–190 (AARPATAAPA) and 198–237 (APAARPGTTTTRPGTTTARPATTTAQRPGAPAGRGPAVAA). The tr-type G domain occupies 398 to 567 (TRSPVVTVMG…MIALQADILD (170 aa)). The G1 stretch occupies residues 407-414 (GHVDHGKT). Residue 407–414 (GHVDHGKT) coordinates GTP. The G2 stretch occupies residues 432 to 436 (GITQH). Positions 455–458 (DTPG) are G3. Residues 455–459 (DTPGH) and 509–512 (NKID) each bind GTP. The segment at 509–512 (NKID) is G4. The G5 stretch occupies residues 545 to 547 (SAK).

Belongs to the TRAFAC class translation factor GTPase superfamily. Classic translation factor GTPase family. IF-2 subfamily.

The protein localises to the cytoplasm. One of the essential components for the initiation of protein synthesis. Protects formylmethionyl-tRNA from spontaneous hydrolysis and promotes its binding to the 30S ribosomal subunits. Also involved in the hydrolysis of GTP during the formation of the 70S ribosomal complex. In Bradyrhizobium diazoefficiens (strain JCM 10833 / BCRC 13528 / IAM 13628 / NBRC 14792 / USDA 110), this protein is Translation initiation factor IF-2.